A 531-amino-acid chain; its full sequence is GMP synthase [glutamine-hydrolyzing] (531 aa).

Positions 20–213 (KILIVDFGSQ…VRKVAGLKGD (194 aa)) constitute a Glutamine amidotransferase type-1 domain. Catalysis depends on Cys-97, which acts as the Nucleophile. Active-site residues include His-187 and Glu-189. The GMPS ATP-PPase domain maps to 214 to 406 (WTMRAFREEA…LGLPDVFVGR (193 aa)). Position 241–247 (241–247 (SGGVDSA)) interacts with ATP.

As to quaternary structure, homodimer.

It carries out the reaction XMP + L-glutamine + ATP + H2O = GMP + L-glutamate + AMP + diphosphate + 2 H(+). The protein operates within purine metabolism; GMP biosynthesis; GMP from XMP (L-Gln route): step 1/1. Functionally, catalyzes the synthesis of GMP from XMP. The chain is GMP synthase [glutamine-hydrolyzing] from Afipia carboxidovorans (strain ATCC 49405 / DSM 1227 / KCTC 32145 / OM5) (Oligotropha carboxidovorans).